Here is a 388-residue protein sequence, read N- to C-terminus: Amylovoran biosynthesis protein AmsL (388 aa).

6 helical membrane-spanning segments follow: residues 24-44 (VLLS…ISWF), 47-67 (LPQL…LGSL), 97-117 (FTVI…LGLF), 231-251 (FVIM…SPVI), 297-317 (FYWN…VWIW), and 359-379 (ISVS…NLFI).

This sequence belongs to the polysaccharide synthase family.

It is found in the cell membrane. Its pathway is glycan metabolism; exopolysaccharide biosynthesis. Involved in the biosynthesis of amylovoran which functions as a virulence factor. This Erwinia amylovora (Fire blight bacteria) protein is Amylovoran biosynthesis protein AmsL (amsL).